Reading from the N-terminus, the 68-residue chain is Disintegrin EMF10B (68 aa).

The Disintegrin domain maps to 1–68; it reads ELLQNSGNPC…SDCPRNPVFK (68 aa). 4 cysteine pairs are disulfide-bonded: cysteine 10-cysteine 33, cysteine 24-cysteine 30, cysteine 29-cysteine 54, and cysteine 42-cysteine 61. A Cell attachment site; atypical (MGD) motif is present at residues 46 to 48; that stretch reads MGD.

This sequence belongs to the venom metalloproteinase (M12B) family. P-II subfamily. P-IIe sub-subfamily. In terms of assembly, heterodimer with EMF10A; disulfide-linked. As to expression, expressed by the venom gland.

Its subcellular location is the secreted. In terms of biological role, extremely potent and selective inhibitor of integrin alpha-5/beta-1 (ITGA5/ITGB1). Partially inhibits adhesion of cells expressing alpha-IIb/beta-3 (ITGA2B/ITGB3), alpha-V/beta-3 (ITGAV/ITGB3), and alpha-4/beta-1 (ITGA4/ITGB1) to appropriate ligands only at concentration higher than 500 nM. Weakly inhibits ADP-induced platelet aggregation. This chain is Disintegrin EMF10B, found in Eristicophis macmahoni (Leaf-nosed viper).